The chain runs to 311 residues: Methionyl-tRNA formyltransferase (311 aa).

109 to 112 (SLLP) is a (6S)-5,6,7,8-tetrahydrofolate binding site.

The protein belongs to the Fmt family.

It catalyses the reaction L-methionyl-tRNA(fMet) + (6R)-10-formyltetrahydrofolate = N-formyl-L-methionyl-tRNA(fMet) + (6S)-5,6,7,8-tetrahydrofolate + H(+). Functionally, attaches a formyl group to the free amino group of methionyl-tRNA(fMet). The formyl group appears to play a dual role in the initiator identity of N-formylmethionyl-tRNA by promoting its recognition by IF2 and preventing the misappropriation of this tRNA by the elongation apparatus. The polypeptide is Methionyl-tRNA formyltransferase (Staphylococcus aureus (strain bovine RF122 / ET3-1)).